We begin with the raw amino-acid sequence, 286 residues long: Glycine--tRNA ligase alpha subunit (286 aa).

This sequence belongs to the class-II aminoacyl-tRNA synthetase family. As to quaternary structure, tetramer of two alpha and two beta subunits.

It is found in the cytoplasm. It catalyses the reaction tRNA(Gly) + glycine + ATP = glycyl-tRNA(Gly) + AMP + diphosphate. The sequence is that of Glycine--tRNA ligase alpha subunit from Campylobacter lari (strain RM2100 / D67 / ATCC BAA-1060).